An 85-amino-acid polypeptide reads, in one-letter code: Selenoprotein W (85 aa).

The segment at residues 10–13 is a cross-link (cysteinyl-selenocysteine (Cys-Sec); redox-active); it reads CGAU. Selenocysteine 13 is a non-standard amino acid (selenocysteine).

This sequence belongs to the SelWTH family. Selenoprotein W subfamily. In terms of tissue distribution, expressed ubiquitously with predominant expression in the pituitary, spinal cord, sciatic nerve, cerebral cortex, cerebral nuclei, thalamus, cerebellum, muscle, cartilage, trachea, gizzard and artery. Weakly expressed in pancreas, testis, ovary, kidney and veins.

Its subcellular location is the cytoplasm. Functionally, plays a role as a glutathione (GSH)-dependent antioxidant. May be involved in a redox-related process. May play a role in the myopathies of selenium deficiency. This is Selenoprotein W from Gallus gallus (Chicken).